The sequence spans 1401 residues: Uveal autoantigen with coiled-coil domains and ankyrin repeats protein (1401 aa).

ANK repeat units lie at residues 25–53, 54–83, 87–116, 120–149, 153–182, and 186–215; these read LMRA…KLDV, EGRS…DITT, AGRN…PTEH, QGRT…SVNA, DGRT…DINS, and QNRT…DVTL. Ser-265 carries the phosphoserine modification. 3 coiled-coil regions span residues 273 to 361, 423 to 827, and 856 to 1368; these read TKSN…SRFK, ENEI…EKIY, and ALSS…VIAI. A Glycyl lysine isopeptide (Lys-Gly) (interchain with G-Cter in SUMO2) cross-link involves residue Lys-1020.

As to quaternary structure, component of the apoptosome complex, composed of APAF1, pro-caspase-9 and UACA. In the complex, it probably interacts directly with APAF1. Interacts with LGALS3. Interacts with ARF6 and ACTB. Interacts with RAB39A. Highly expressed in muscle and heart, moderately in liver, kidney and pancreas, and weakly in placenta and lung.

The protein resides in the nucleus. It is found in the cytoplasm. The protein localises to the cytoskeleton. Its function is as follows. Regulates APAF1 expression and plays an important role in the regulation of stress-induced apoptosis. Promotes apoptosis by regulating three pathways, apoptosome up-regulation, LGALS3/galectin-3 down-regulation and NF-kappa-B inactivation. Regulates the redistribution of APAF1 into the nucleus after proapoptotic stress. Down-regulates the expression of LGALS3 by inhibiting NFKB1. Modulates isoactin dynamics to regulate the morphological alterations required for cell growth and motility. Interaction with ARF6 may modulate cell shape and motility after injury. May be involved in multiple neurite formation. The polypeptide is Uveal autoantigen with coiled-coil domains and ankyrin repeats protein (UACA) (Bos taurus (Bovine)).